A 376-amino-acid chain; its full sequence is Chaperone protein DnaJ (376 aa).

The J domain occupies 5-70; it reads DFYEVLGVER…SKRAAYDQYG (66 aa). The CR-type zinc finger occupies 135-213; it reads GTTVTIRVPT…CHGQGRVEEQ (79 aa). 8 residues coordinate Zn(2+): C148, C151, C165, C168, C187, C190, C201, and C204. 4 CXXCXGXG motif repeats span residues 148–155, 165–172, 187–194, and 201–208; these read CKTCDGSG, CTTCGGIG, CPRCHGSG, and CGSCHGQG.

It belongs to the DnaJ family. Homodimer. Zn(2+) is required as a cofactor.

It is found in the cytoplasm. In terms of biological role, participates actively in the response to hyperosmotic and heat shock by preventing the aggregation of stress-denatured proteins and by disaggregating proteins, also in an autonomous, DnaK-independent fashion. Unfolded proteins bind initially to DnaJ; upon interaction with the DnaJ-bound protein, DnaK hydrolyzes its bound ATP, resulting in the formation of a stable complex. GrpE releases ADP from DnaK; ATP binding to DnaK triggers the release of the substrate protein, thus completing the reaction cycle. Several rounds of ATP-dependent interactions between DnaJ, DnaK and GrpE are required for fully efficient folding. Also involved, together with DnaK and GrpE, in the DNA replication of plasmids through activation of initiation proteins. The sequence is that of Chaperone protein DnaJ from Stutzerimonas stutzeri (Pseudomonas stutzeri).